We begin with the raw amino-acid sequence, 175 residues long: MTAFTRFAHSRASWLILTGSAIALEAAALYFQYVMKLDPCVMCIYQRLAVFGILAAGLIGMTAPKYRIVRILGALGWAVSATWGLKLALALVDMQNNPSPFSTCSFLPEFPAWMPLHEWFPSVMLPTGMCTDVPWQFMGVTMAEWMVVAFSGYLVALLLFIVPILSGSNKPSLYK.

Over 1 to 13 (MTAFTRFAHSRAS) the chain is Cytoplasmic. A helical transmembrane segment spans residues 14-30 (WLILTGSAIALEAAALY). The Periplasmic segment spans residues 31 to 48 (FQYVMKLDPCVMCIYQRL). A disulfide bond links Cys40 and Cys43. A helical membrane pass occupies residues 49–64 (AVFGILAAGLIGMTAP). Topologically, residues 65–71 (KYRIVRI) are cytoplasmic. Residues 72 to 89 (LGALGWAVSATWGLKLAL) form a helical membrane-spanning segment. At 90–144 (ALVDMQNNPSPFSTCSFLPEFPAWMPLHEWFPSVMLPTGMCTDVPWQFMGVTMAE) the chain is on the periplasmic side. The cysteines at positions 104 and 130 are disulfide-linked. The helical transmembrane segment at 145–163 (WMVVAFSGYLVALLLFIVP) threads the bilayer. The Cytoplasmic portion of the chain corresponds to 164–175 (ILSGSNKPSLYK).

This sequence belongs to the DsbB family.

It localises to the cell inner membrane. Functionally, required for disulfide bond formation in some periplasmic proteins. Acts by oxidizing the DsbA protein. The chain is Disulfide bond formation protein B from Shewanella sp. (strain MR-4).